The primary structure comprises 411 residues: Mitotic apparatus protein p62 (411 aa).

3 stretches are compositionally biased toward acidic residues: residues 134 to 156 (AYEVGDEDLEDEDEGEEDEEEEE), 183 to 201 (ELDEDEDDDEEEEEEEEEI), and 246 to 321 (DDDE…EEDS). Positions 134–378 (AYEVGDEDLE…KSPSKPKKEE (245 aa)) are disordered. Residues 351 to 367 (GMKEKKTYSLEDMKQDL) are compositionally biased toward basic and acidic residues.

This sequence belongs to the nucleoplasmin family. In terms of processing, phosphorylated by CaM-kinase II in vitro.

It is found in the nucleus. In terms of biological role, required for mitotic progression. Binds to chromatin. The protein is Mitotic apparatus protein p62 of Lytechinus pictus (Painted sea urchin).